The primary structure comprises 112 residues: Small ribosomal subunit protein bS6 (112 aa).

This sequence belongs to the bacterial ribosomal protein bS6 family.

Functionally, binds together with bS18 to 16S ribosomal RNA. This Chlamydia felis (strain Fe/C-56) (Chlamydophila felis) protein is Small ribosomal subunit protein bS6.